Reading from the N-terminus, the 285-residue chain is Sulfur carrier protein TtuD (285 aa).

Rhodanese domains are found at residues Glu-20–Thr-127 and Lys-161–Ala-281. Residue Cys-240 is modified to Cysteine persulfide.

In terms of processing, cys-240 can accept a sulfur atom as persulfide forms from cysteine desulfurases IscS and SufS.

It participates in tRNA modification. Its function is as follows. Required for the efficient 2-thiolation of 5-methyluridine residue at position 54 in the T loop of tRNAs, leading to 5-methyl-2-thiouridine (m(5)s(2)U or s(2)T). TtuD is a sulfur carrier protein that has a role to direct sulfur flow from cysteine desulfurases to m(5)s(2)U synthesis in vivo. It enhances the cysteine desulfurase activity of IscS and SufS, as well as the formation of thiocarboxylated TtuB (TtuB-COSH) in the presence of these desulfurases. The sequence is that of Sulfur carrier protein TtuD from Thermus thermophilus (strain ATCC BAA-163 / DSM 7039 / HB27).